Consider the following 102-residue polypeptide: Small ribosomal subunit protein uS10 (102 aa).

It belongs to the universal ribosomal protein uS10 family. In terms of assembly, part of the 30S ribosomal subunit.

Involved in the binding of tRNA to the ribosomes. The chain is Small ribosomal subunit protein uS10 from Clostridium perfringens (strain ATCC 13124 / DSM 756 / JCM 1290 / NCIMB 6125 / NCTC 8237 / Type A).